Consider the following 661-residue polypeptide: Ubiquitin-associated and SH3 domain-containing protein A (661 aa).

Residues 15–60 enclose the UBA domain; that stretch reads KLKSRSSPSLLEPLLAMGFPVHTALKALAATGRKTAEEALAWLHDH. The SH3 domain occupies 276–341; sequence VHYQTLRALF…PENYTDRASE (66 aa). Residues 395–661 form a phosphatase-like region; sequence RKSVLVVRHG…FNWRNWISGN (267 aa).

Homodimer or homooligomer. Interacts with CBL. Part of a complex containing CBL and activated EGFR. Interacts with ubiquitin and with mono-ubiquitinated proteins. Interacts with dynamin. In terms of tissue distribution, highest expression of UBASH3A in tissues belonging to the immune system, including spleen, peripheral blood leukocytes, thymus and bone marrow.

Its subcellular location is the cytoplasm. It is found in the nucleus. Interferes with CBL-mediated down-regulation and degradation of receptor-type tyrosine kinases. Promotes accumulation of activated target receptors, such as T-cell receptors, EGFR and PDGFRB, on the cell surface. Exhibits negligible protein tyrosine phosphatase activity at neutral pH. May act as a dominant-negative regulator of UBASH3B-dependent dephosphorylation. May inhibit dynamin-dependent endocytic pathways by functionally sequestering dynamin via its SH3 domain. The protein is Ubiquitin-associated and SH3 domain-containing protein A (UBASH3A) of Homo sapiens (Human).